Reading from the N-terminus, the 211-residue chain is Large ribosomal subunit protein uL4 (211 aa).

Disordered regions lie at residues 1–28 (MAQA…ETEP) and 48–99 (TAST…GPRY). The segment covering 10–28 (RTGRRSEMELKGPRFETEP) has biased composition (basic and acidic residues).

This sequence belongs to the universal ribosomal protein uL4 family. Part of the 50S ribosomal subunit.

One of the primary rRNA binding proteins, this protein initially binds near the 5'-end of the 23S rRNA. It is important during the early stages of 50S assembly. It makes multiple contacts with different domains of the 23S rRNA in the assembled 50S subunit and ribosome. Functionally, forms part of the polypeptide exit tunnel. The protein is Large ribosomal subunit protein uL4 of Rubrobacter xylanophilus (strain DSM 9941 / JCM 11954 / NBRC 16129 / PRD-1).